The primary structure comprises 79 residues: NADH-ubiquinone oxidoreductase chain 4 (79 aa).

Helical transmembrane passes span 24–44 and 54–74; these read SYTL…LANI and LLIN…WFLL.

This sequence belongs to the complex I subunit 4 family.

The protein localises to the mitochondrion membrane. It catalyses the reaction a ubiquinone + NADH + 5 H(+)(in) = a ubiquinol + NAD(+) + 4 H(+)(out). Core subunit of the mitochondrial membrane respiratory chain NADH dehydrogenase (Complex I) that is believed to belong to the minimal assembly required for catalysis. Complex I functions in the transfer of electrons from NADH to the respiratory chain. The immediate electron acceptor for the enzyme is believed to be ubiquinone. This is NADH-ubiquinone oxidoreductase chain 4 (ND4) from Simulium vittatum (Striped black fly).